The following is a 488-amino-acid chain: Glutamyl-tRNA(Gln) amidotransferase subunit A, mitochondrial (488 aa).

Residues lysine 62 and serine 140 each act as charge relay system in the active site. The active-site Acyl-ester intermediate is serine 164. The segment at 205–228 (GHDDNDPTSITPQTRERIQDRLSR) is disordered. Over residues 218 to 227 (TRERIQDRLS) the composition is skewed to basic and acidic residues.

The protein belongs to the amidase family. GatA subfamily. In terms of assembly, subunit of the heterotrimeric GatCAB amidotransferase (AdT) complex, composed of A, B and C subunits.

It is found in the mitochondrion. The catalysed reaction is L-glutamyl-tRNA(Gln) + L-glutamine + ATP + H2O = L-glutaminyl-tRNA(Gln) + L-glutamate + ADP + phosphate + H(+). Its function is as follows. Allows the formation of correctly charged Gln-tRNA(Gln) through the transamidation of misacylated Glu-tRNA(Gln) in the mitochondria. The reaction takes place in the presence of glutamine and ATP through an activated gamma-phospho-Glu-tRNA(Gln). This is Glutamyl-tRNA(Gln) amidotransferase subunit A, mitochondrial from Tuber melanosporum (strain Mel28) (Perigord black truffle).